A 265-amino-acid polypeptide reads, in one-letter code: Deoxyguanosine kinase, mitochondrial (265 aa).

32–40 (GNIAVGKST) provides a ligand contact to ATP. Positions 57, 88, 99, and 106 each coordinate substrate. The Proton acceptor role is filled by Glu-129. 2 residues coordinate substrate: Arg-130 and Asp-135. 190–194 (RLQRR) contributes to the ATP binding site. Residue Glu-199 participates in substrate binding. 242-244 (EDF) provides a ligand contact to ATP.

It belongs to the DCK/DGK family. In terms of assembly, homodimer.

It is found in the mitochondrion. The catalysed reaction is 2'-deoxyguanosine + ATP = dGMP + ADP + H(+). In terms of biological role, phosphorylates deoxyguanosine in the mitochondrial matrix with high efficiency but shows very low activity against other deoxynucleosides. The polypeptide is Deoxyguanosine kinase, mitochondrial (Xenopus laevis (African clawed frog)).